A 152-amino-acid polypeptide reads, in one-letter code: MGRFIFVSFGLLVVYLSLSGTAADCSSSWSSYEGHCYKAFKQSKTWADAESFCTKQVNGGHLVSIESSGEADFVAHLIAQKIKSAKIHVWIGLRAQNKEKQCSIEWSDGSSISYENWIEEESKKCLGVHKATGFRKWENFYCEQRDPFVCEA.

An N-terminal signal peptide occupies residues 1 to 23 (MGRFIFVSFGLLVVYLSLSGTAA). Residues 24–152 (DCSSSWSSYE…EQRDPFVCEA (129 aa)) form the C-type lectin domain. Cystine bridges form between Cys-25-Cys-36, Cys-53-Cys-150, and Cys-125-Cys-142. Ca(2+) is bound by residues Ser-64, Glu-66, and Glu-70. Glu-151 is a Ca(2+) binding site.

The protein belongs to the snaclec family. In terms of assembly, heterodimer of subunits A and B; disulfide-linked. In terms of tissue distribution, expressed by the venom gland.

Its subcellular location is the secreted. In terms of biological role, anticoagulant protein which binds to the gamma-carboxyglutamic acid-domain regions of factors IX and factor X in the presence of calcium with a 1 to 1 stoichiometry. Also inhibits platelet aggregation by binding to platelet glycoprotein Ibalpha (GP1BA) and functioning as a blocker of vWF. Is devoid of hemorrhagic and lethal activities. Possesses antithrombotic and thrombolytic activities. Also hydrolyzes the Aalpha-chain of fibrinogen. Does not affect the Bbeta-chain and the gamma chain. The chain is Snaclec anticoagulant protein subunit A from Deinagkistrodon acutus (Hundred-pace snake).